The chain runs to 333 residues: 4-hydroxy-3-methylbut-2-enyl diphosphate reductase (333 aa).

C20 serves as a coordination point for [4Fe-4S] cluster. (2E)-4-hydroxy-3-methylbut-2-enyl diphosphate contacts are provided by H49 and H82. 2 residues coordinate dimethylallyl diphosphate: H49 and H82. The isopentenyl diphosphate site is built by H49 and H82. Residue C104 coordinates [4Fe-4S] cluster. H132 is a (2E)-4-hydroxy-3-methylbut-2-enyl diphosphate binding site. Position 132 (H132) interacts with dimethylallyl diphosphate. H132 lines the isopentenyl diphosphate pocket. The Proton donor role is filled by E134. A (2E)-4-hydroxy-3-methylbut-2-enyl diphosphate-binding site is contributed by T172. C202 contacts [4Fe-4S] cluster. 4 residues coordinate (2E)-4-hydroxy-3-methylbut-2-enyl diphosphate: S230, S231, N232, and S274. Dimethylallyl diphosphate is bound by residues S230, S231, N232, and S274. Isopentenyl diphosphate-binding residues include S230, S231, N232, and S274.

This sequence belongs to the IspH family. Requires [4Fe-4S] cluster as cofactor.

It catalyses the reaction isopentenyl diphosphate + 2 oxidized [2Fe-2S]-[ferredoxin] + H2O = (2E)-4-hydroxy-3-methylbut-2-enyl diphosphate + 2 reduced [2Fe-2S]-[ferredoxin] + 2 H(+). The catalysed reaction is dimethylallyl diphosphate + 2 oxidized [2Fe-2S]-[ferredoxin] + H2O = (2E)-4-hydroxy-3-methylbut-2-enyl diphosphate + 2 reduced [2Fe-2S]-[ferredoxin] + 2 H(+). Its pathway is isoprenoid biosynthesis; dimethylallyl diphosphate biosynthesis; dimethylallyl diphosphate from (2E)-4-hydroxy-3-methylbutenyl diphosphate: step 1/1. The protein operates within isoprenoid biosynthesis; isopentenyl diphosphate biosynthesis via DXP pathway; isopentenyl diphosphate from 1-deoxy-D-xylulose 5-phosphate: step 6/6. In terms of biological role, catalyzes the conversion of 1-hydroxy-2-methyl-2-(E)-butenyl 4-diphosphate (HMBPP) into a mixture of isopentenyl diphosphate (IPP) and dimethylallyl diphosphate (DMAPP). Acts in the terminal step of the DOXP/MEP pathway for isoprenoid precursor biosynthesis. In Polaromonas sp. (strain JS666 / ATCC BAA-500), this protein is 4-hydroxy-3-methylbut-2-enyl diphosphate reductase.